A 225-amino-acid polypeptide reads, in one-letter code: N-(5'-phosphoribosyl)anthranilate isomerase (225 aa).

This sequence belongs to the TrpF family.

It carries out the reaction N-(5-phospho-beta-D-ribosyl)anthranilate = 1-(2-carboxyphenylamino)-1-deoxy-D-ribulose 5-phosphate. Its pathway is amino-acid biosynthesis; L-tryptophan biosynthesis; L-tryptophan from chorismate: step 3/5. The sequence is that of N-(5'-phosphoribosyl)anthranilate isomerase from Nitrobacter winogradskyi (strain ATCC 25391 / DSM 10237 / CIP 104748 / NCIMB 11846 / Nb-255).